A 422-amino-acid chain; its full sequence is Serine protease inhibitor A3A (422 aa).

Positions 1 to 17 (MAFIAALGLLMVGICPA) are cleaved as a signal peptide. N-linked (GlcNAc...) asparagine glycans are attached at residues Asn218, Asn230, and Asn271. The interval 369–394 (HTEADVITIARYNFQSAKIKAKIVKV) is RCL.

Belongs to the serpin family.

It localises to the secreted. The chain is Serine protease inhibitor A3A (Serpina3a) from Mus musculus (Mouse).